The chain runs to 152 residues: Deoxyuridine 5'-triphosphate nucleotidohydrolase (152 aa).

Substrate-binding positions include Arg-71–Gly-73, Asn-84, Leu-88–Asp-90, and Met-98.

The protein belongs to the dUTPase family. It depends on Mg(2+) as a cofactor.

The enzyme catalyses dUTP + H2O = dUMP + diphosphate + H(+). It functions in the pathway pyrimidine metabolism; dUMP biosynthesis; dUMP from dCTP (dUTP route): step 2/2. Functionally, this enzyme is involved in nucleotide metabolism: it produces dUMP, the immediate precursor of thymidine nucleotides and it decreases the intracellular concentration of dUTP so that uracil cannot be incorporated into DNA. The sequence is that of Deoxyuridine 5'-triphosphate nucleotidohydrolase from Shigella flexneri.